The primary structure comprises 189 residues: Peptidyl-tRNA hydrolase (189 aa).

Phe-15 provides a ligand contact to tRNA. His-20 (proton acceptor) is an active-site residue. Tyr-65, Asn-67, and Asn-113 together coordinate tRNA.

It belongs to the PTH family. As to quaternary structure, monomer.

It is found in the cytoplasm. The catalysed reaction is an N-acyl-L-alpha-aminoacyl-tRNA + H2O = an N-acyl-L-amino acid + a tRNA + H(+). Its function is as follows. Hydrolyzes ribosome-free peptidyl-tRNAs (with 1 or more amino acids incorporated), which drop off the ribosome during protein synthesis, or as a result of ribosome stalling. Functionally, catalyzes the release of premature peptidyl moieties from peptidyl-tRNA molecules trapped in stalled 50S ribosomal subunits, and thus maintains levels of free tRNAs and 50S ribosomes. In Phytoplasma australiense, this protein is Peptidyl-tRNA hydrolase.